The following is a 318-amino-acid chain: Protein W (318 aa).

Disordered regions lie at residues 1 to 23 (MDQD…GGRE) and 54 to 318 (INTL…KKGA). Composition is skewed to basic and acidic residues over residues 7–20 (ISKE…EASG), 99–110 (AEAHARNVDKQN), 150–168 (GAED…RGED), and 175–193 (EEIR…RADN). A phosphoserine; by host mark is found at Ser249, Ser257, and Ser260.

In Sendai virus (strain Ohita) (SeV), this protein is Protein W (P/V/C).